The chain runs to 144 residues: Large ribosomal subunit protein uL15 (144 aa).

Positions 1-51 are disordered; that stretch reads MRLNTLSPAEGAKHSAKRLGRGIGSGLGKTGGRGHKGQKSRTGGKVRRGFE. Residues 21–31 show a composition bias toward gly residues; the sequence is RGIGSGLGKTG. Residues 32–47 show a composition bias toward basic residues; sequence GRGHKGQKSRTGGKVR.

The protein belongs to the universal ribosomal protein uL15 family. Part of the 50S ribosomal subunit.

Functionally, binds to the 23S rRNA. This Actinobacillus succinogenes (strain ATCC 55618 / DSM 22257 / CCUG 43843 / 130Z) protein is Large ribosomal subunit protein uL15.